Reading from the N-terminus, the 242-residue chain is Glutamate transport ATP-binding protein GluA (242 aa).

One can recognise an ABC transporter domain in the interval 2 to 236 (IKMTGVQKYF…PKSDRAKDFL (235 aa)). 34–41 (GPSGSGKS) contacts ATP.

This sequence belongs to the ABC transporter superfamily. As to quaternary structure, the complex is composed of two ATP-binding proteins (GluA), two transmembrane proteins (GluC and GluD) and a solute-binding protein (GluB).

It localises to the cell membrane. It carries out the reaction a polar amino acid(out) + ATP + H2O = a polar amino acid(in) + ADP + phosphate + H(+). It catalyses the reaction L-glutamate(out) + ATP + H2O = L-glutamate(in) + ADP + phosphate + H(+). Its function is as follows. Part of the ABC transporter complex GluABCD involved in glutamate uptake. Probably responsible for energy coupling to the transport system. The polypeptide is Glutamate transport ATP-binding protein GluA (Corynebacterium glutamicum (strain ATCC 13032 / DSM 20300 / JCM 1318 / BCRC 11384 / CCUG 27702 / LMG 3730 / NBRC 12168 / NCIMB 10025 / NRRL B-2784 / 534)).